Reading from the N-terminus, the 194-residue chain is NADH-quinone oxidoreductase subunit B (194 aa).

Residues C73, C74, C138, and C168 each coordinate [4Fe-4S] cluster.

Belongs to the complex I 20 kDa subunit family. As to quaternary structure, NDH-1 is composed of 14 different subunits. Subunits NuoB, C, D, E, F, and G constitute the peripheral sector of the complex. [4Fe-4S] cluster is required as a cofactor.

It is found in the cell inner membrane. It catalyses the reaction a quinone + NADH + 5 H(+)(in) = a quinol + NAD(+) + 4 H(+)(out). Functionally, NDH-1 shuttles electrons from NADH, via FMN and iron-sulfur (Fe-S) centers, to quinones in the respiratory chain. The immediate electron acceptor for the enzyme in this species is believed to be ubiquinone. Couples the redox reaction to proton translocation (for every two electrons transferred, four hydrogen ions are translocated across the cytoplasmic membrane), and thus conserves the redox energy in a proton gradient. The sequence is that of NADH-quinone oxidoreductase subunit B from Bradyrhizobium sp. (strain BTAi1 / ATCC BAA-1182).